The primary structure comprises 332 residues: Anthranilate phosphoribosyltransferase (332 aa).

Residues Gly79, 82 to 83 (GD), Ser87, 89 to 92 (NIST), 107 to 115 (KHGNRSVSS), and Ser119 each bind 5-phospho-alpha-D-ribose 1-diphosphate. Gly79 lines the anthranilate pocket. Mg(2+) is bound at residue Ser91. Asn110 serves as a coordination point for anthranilate. Arg165 contacts anthranilate. 2 residues coordinate Mg(2+): Asp223 and Glu224.

The protein belongs to the anthranilate phosphoribosyltransferase family. In terms of assembly, homodimer. Mg(2+) serves as cofactor.

The catalysed reaction is N-(5-phospho-beta-D-ribosyl)anthranilate + diphosphate = 5-phospho-alpha-D-ribose 1-diphosphate + anthranilate. Its pathway is amino-acid biosynthesis; L-tryptophan biosynthesis; L-tryptophan from chorismate: step 2/5. Catalyzes the transfer of the phosphoribosyl group of 5-phosphorylribose-1-pyrophosphate (PRPP) to anthranilate to yield N-(5'-phosphoribosyl)-anthranilate (PRA). In Photorhabdus laumondii subsp. laumondii (strain DSM 15139 / CIP 105565 / TT01) (Photorhabdus luminescens subsp. laumondii), this protein is Anthranilate phosphoribosyltransferase.